A 333-amino-acid chain; its full sequence is Transaldolase (333 aa).

The Schiff-base intermediate with substrate role is filled by K135.

The protein belongs to the transaldolase family. Type 1 subfamily. Homodimer.

The protein resides in the cytoplasm. It carries out the reaction D-sedoheptulose 7-phosphate + D-glyceraldehyde 3-phosphate = D-erythrose 4-phosphate + beta-D-fructose 6-phosphate. The protein operates within carbohydrate degradation; pentose phosphate pathway; D-glyceraldehyde 3-phosphate and beta-D-fructose 6-phosphate from D-ribose 5-phosphate and D-xylulose 5-phosphate (non-oxidative stage): step 2/3. Its function is as follows. Transaldolase is important for the balance of metabolites in the pentose-phosphate pathway. In Prochlorococcus marinus subsp. pastoris (strain CCMP1986 / NIES-2087 / MED4), this protein is Transaldolase.